Consider the following 64-residue polypeptide: Putative isoleucine--tRNA ligase (64 aa).

It belongs to the class-I aminoacyl-tRNA synthetase family. Member of a complex that includes annexin.

The catalysed reaction is tRNA(Ile) + L-isoleucine + ATP = L-isoleucyl-tRNA(Ile) + AMP + diphosphate. The protein is Putative isoleucine--tRNA ligase of Physarum polycephalum (Slime mold).